The primary structure comprises 39 residues: Photosystem II reaction center protein L (39 aa).

The chain crosses the membrane as a helical span at residues Ser18 to Phe38.

Belongs to the PsbL family. PSII is composed of 1 copy each of membrane proteins PsbA, PsbB, PsbC, PsbD, PsbE, PsbF, PsbH, PsbI, PsbJ, PsbK, PsbL, PsbM, PsbT, PsbX, PsbY, PsbZ, Psb30/Ycf12, peripheral proteins PsbO, CyanoQ (PsbQ), PsbU, PsbV and a large number of cofactors. It forms dimeric complexes.

Its subcellular location is the cellular thylakoid membrane. Its function is as follows. One of the components of the core complex of photosystem II (PSII). PSII is a light-driven water:plastoquinone oxidoreductase that uses light energy to abstract electrons from H(2)O, generating O(2) and a proton gradient subsequently used for ATP formation. It consists of a core antenna complex that captures photons, and an electron transfer chain that converts photonic excitation into a charge separation. This subunit is found at the monomer-monomer interface and is required for correct PSII assembly and/or dimerization. The polypeptide is Photosystem II reaction center protein L (Parasynechococcus marenigrum (strain WH8102)).